The primary structure comprises 575 residues: MAEPNDVAAAGAAAIAASFEAYQEERARITRRARERFEKRDWAAGQADARERLDLRDRLVNACVGTVRAELGGAAHDHGLWRAMKELYEARVESRPDREIGQSFFNSVTRRVFVTVGVDPAIEFLAADGPAVREGPVPVYARYRREVSTEALLRTVLRACAFAAPYEDLERDARIAAIELDSHLRELDDGQPIEALELVKAVFYRGKGAYLVGRLRRGRYTTPLVLALVHGERGVVLDAILFTQEDVSIVFSFTRSYFHVEVERPRELVAFLSTLLPLKRVSELYIALGFNKHGKTELYREIARHIAETGEAFVPARGDKGLVMSVFTLPGLDVVFKVIKDEFKPPKQTTRREVMDKYRHVFRHDRAGRLVDAQEFEHLAFPADRFSPEVLRELSEECRGSIEIGRAEISVKHLYAERRVTPLNLFIREADEWTARQAVLDFGRALKDLAATNTFPGDLLLKNFGVTRHGRVIFYDYDELTRVTDCVFRDLPTPSGDDEETSGEPWFYVGQDDVFPEELLPFLGLAGRLREVFLQAHGDLLTARYWRAIQERIREGEIVDIYPYREEQRLVHGYE.

Residues 316-322 (ARGDKGL) and Lys337 contribute to the ATP site. Asp372 is a catalytic residue.

It belongs to the AceK family.

It localises to the cytoplasm. It carries out the reaction L-seryl-[isocitrate dehydrogenase] + ATP = O-phospho-L-seryl-[isocitrate dehydrogenase] + ADP + H(+). In terms of biological role, bifunctional enzyme which can phosphorylate or dephosphorylate isocitrate dehydrogenase (IDH) on a specific serine residue. This is a regulatory mechanism which enables bacteria to bypass the Krebs cycle via the glyoxylate shunt in response to the source of carbon. When bacteria are grown on glucose, IDH is fully active and unphosphorylated, but when grown on acetate or ethanol, the activity of IDH declines drastically concomitant with its phosphorylation. In Anaeromyxobacter sp. (strain Fw109-5), this protein is Isocitrate dehydrogenase kinase/phosphatase.